Consider the following 88-residue polypeptide: Putative regulatory protein Ava_1474 (88 aa).

Belongs to the RemA family.

In Trichormus variabilis (strain ATCC 29413 / PCC 7937) (Anabaena variabilis), this protein is Putative regulatory protein Ava_1474.